A 67-amino-acid chain; its full sequence is Teratocyte protein CftICK-II (67 aa).

An N-terminal signal peptide occupies residues 1-25; the sequence is MVKSLLFAIGYLIFLLVTRVNVINA. Cystine bridges form between Cys-28/Cys-42, Cys-35/Cys-46, and Cys-41/Cys-57.

As to expression, abundantly expressed by teratocytes, which are extra-embryonic cells released by parasitoid wasps into their hosts during larval eclosion.

Its subcellular location is the secreted. This endoparasitoid wasp peptide has immununosuppressive, antimicrobial and insecticidal activities. Suppress cellular immunity which is detectable as a reduction of hemocyte encapsulation in the host. Shows moderate antifungal activity against C.albicans (MIC=4 ug/ml). In vivo, ingestion of this peptide (probably at excessive doses) increases larval mortality and reduces leaf consumption of D.saccharalis, a permissive host for C.flavipes. The chain is Teratocyte protein CftICK-II from Cotesia flavipes (Parasitic wasp).